The chain runs to 146 residues: Bradykinin-like neuropeptide (146 aa).

The signal sequence occupies residues 1–24; that stretch reads MTSSIYGFITLSVVALISQTTCRS. Propeptides lie at residues 25–80 and 92–146; these read LDLL…LMEA and LRSY…FRYG.

In terms of tissue distribution, neuron L5.

It localises to the secreted. Functionally, may have important functions in renal physiology and in animal behavior, as does bradykinin. The polypeptide is Bradykinin-like neuropeptide (LUQ-1) (Aplysia californica (California sea hare)).